The chain runs to 280 residues: Chaperone for lacto-N-biosidase (280 aa).

A signal peptide spans 1-37; that stretch reads MPRRHRFAAAIAAVAVAAVLLVTLTVAVVTHGDGAFA.

As to quaternary structure, homodimer.

The protein localises to the secreted. In terms of biological role, chaperone required for active expression of the lacto-N-biosidase LnbX. The chain is Chaperone for lacto-N-biosidase from Bifidobacterium longum subsp. longum (strain ATCC 15707 / DSM 20219 / JCM 1217 / NCTC 11818 / E194b).